The chain runs to 38 residues: Large ribosomal subunit protein bL36 (38 aa).

Belongs to the bacterial ribosomal protein bL36 family.

The chain is Large ribosomal subunit protein bL36 from Myxococcus xanthus (strain DK1622).